The chain runs to 110 residues: U1-lycotoxin-Ls1gg (110 aa).

The signal sequence occupies residues 1–20 (MKFVLLFGVLLVTLFSYSSA). The propeptide occupies 21–44 (EMLDDFDQADEDELLSLIEKEEAR). Cystine bridges form between cysteine 54–cysteine 71, cysteine 61–cysteine 89, and cysteine 73–cysteine 87.

This sequence belongs to the neurotoxin 19 (CSTX) family. 03 subfamily. Expressed by the venom gland.

It is found in the secreted. The sequence is that of U1-lycotoxin-Ls1gg from Lycosa singoriensis (Wolf spider).